A 441-amino-acid polypeptide reads, in one-letter code: Tubulin beta chain (441 aa).

Residues Gln-11, Glu-69, Ser-138, Gly-142, Thr-143, Gly-144, Asn-204, and Asn-226 each contribute to the GTP site. Glu-69 is a binding site for Mg(2+).

It belongs to the tubulin family. As to quaternary structure, dimer of alpha and beta chains. A typical microtubule is a hollow water-filled tube with an outer diameter of 25 nm and an inner diameter of 15 nM. Alpha-beta heterodimers associate head-to-tail to form protofilaments running lengthwise along the microtubule wall with the beta-tubulin subunit facing the microtubule plus end conferring a structural polarity. Microtubules usually have 13 protofilaments but different protofilament numbers can be found in some organisms and specialized cells. Requires Mg(2+) as cofactor.

The protein resides in the cytoplasm. It is found in the cytoskeleton. In terms of biological role, tubulin is the major constituent of microtubules, a cylinder consisting of laterally associated linear protofilaments composed of alpha- and beta-tubulin heterodimers. Microtubules grow by the addition of GTP-tubulin dimers to the microtubule end, where a stabilizing cap forms. Below the cap, tubulin dimers are in GDP-bound state, owing to GTPase activity of alpha-tubulin. The polypeptide is Tubulin beta chain (Babesia bovis).